A 367-amino-acid polypeptide reads, in one-letter code: Glutamate 5-kinase (367 aa).

Residue lysine 10 participates in ATP binding. 3 residues coordinate substrate: serine 50, aspartate 137, and asparagine 149. Residues 169-170 (TD) and 211-217 (TGGMGTK) contribute to the ATP site. One can recognise a PUA domain in the interval 275 to 353 (AGEITVDEGA…QQIDAILGYE (79 aa)).

The protein belongs to the glutamate 5-kinase family.

Its subcellular location is the cytoplasm. The catalysed reaction is L-glutamate + ATP = L-glutamyl 5-phosphate + ADP. The protein operates within amino-acid biosynthesis; L-proline biosynthesis; L-glutamate 5-semialdehyde from L-glutamate: step 1/2. Its function is as follows. Catalyzes the transfer of a phosphate group to glutamate to form L-glutamate 5-phosphate. This is Glutamate 5-kinase from Cronobacter sakazakii (strain ATCC BAA-894) (Enterobacter sakazakii).